Here is a 95-residue protein sequence, read N- to C-terminus: Aspartyl/glutamyl-tRNA(Asn/Gln) amidotransferase subunit C (95 aa).

This sequence belongs to the GatC family. In terms of assembly, heterotrimer of A, B and C subunits.

The catalysed reaction is L-glutamyl-tRNA(Gln) + L-glutamine + ATP + H2O = L-glutaminyl-tRNA(Gln) + L-glutamate + ADP + phosphate + H(+). It catalyses the reaction L-aspartyl-tRNA(Asn) + L-glutamine + ATP + H2O = L-asparaginyl-tRNA(Asn) + L-glutamate + ADP + phosphate + 2 H(+). Its function is as follows. Allows the formation of correctly charged Asn-tRNA(Asn) or Gln-tRNA(Gln) through the transamidation of misacylated Asp-tRNA(Asn) or Glu-tRNA(Gln) in organisms which lack either or both of asparaginyl-tRNA or glutaminyl-tRNA synthetases. The reaction takes place in the presence of glutamine and ATP through an activated phospho-Asp-tRNA(Asn) or phospho-Glu-tRNA(Gln). This is Aspartyl/glutamyl-tRNA(Asn/Gln) amidotransferase subunit C from Cereibacter sphaeroides (strain ATCC 17023 / DSM 158 / JCM 6121 / CCUG 31486 / LMG 2827 / NBRC 12203 / NCIMB 8253 / ATH 2.4.1.) (Rhodobacter sphaeroides).